A 388-amino-acid polypeptide reads, in one-letter code: Succinate--CoA ligase [ADP-forming] subunit beta (388 aa).

Residues 9 to 245 enclose the ATP-grasp domain; the sequence is KALLKEYGMP…KSQENERELK (237 aa). Residues lysine 46, 53–55, glutamate 100, tyrosine 103, and glutamate 108 contribute to the ATP site; that span reads GRG. Mg(2+) is bound by residues asparagine 200 and aspartate 214. Residues asparagine 265 and 322-324 each bind substrate; that span reads GIV.

The protein belongs to the succinate/malate CoA ligase beta subunit family. As to quaternary structure, heterotetramer of two alpha and two beta subunits. Requires Mg(2+) as cofactor.

It carries out the reaction succinate + ATP + CoA = succinyl-CoA + ADP + phosphate. The catalysed reaction is GTP + succinate + CoA = succinyl-CoA + GDP + phosphate. It participates in carbohydrate metabolism; tricarboxylic acid cycle; succinate from succinyl-CoA (ligase route): step 1/1. Succinyl-CoA synthetase functions in the citric acid cycle (TCA), coupling the hydrolysis of succinyl-CoA to the synthesis of either ATP or GTP and thus represents the only step of substrate-level phosphorylation in the TCA. The beta subunit provides nucleotide specificity of the enzyme and binds the substrate succinate, while the binding sites for coenzyme A and phosphate are found in the alpha subunit. This chain is Succinate--CoA ligase [ADP-forming] subunit beta, found in Acinetobacter baumannii (strain SDF).